A 211-amino-acid chain; its full sequence is Mitotic spindle assembly checkpoint protein MAD2B (211 aa).

In terms of domain architecture, HORMA spans 13–203 (QVVADILCEF…SDILKMQLYV (191 aa)).

In terms of assembly, homooligomer. Interacts with rev1. Interacts with rev3l. Interacts with fzr1 (in complex with the anaphase promoting complex APC). May interact with cdc20.

The protein localises to the nucleus. Its subcellular location is the cytoplasm. It localises to the cytoskeleton. The protein resides in the spindle. Functionally, adapter protein able to interact with different proteins and involved in different biological processes. Mediates the interaction between the error-prone DNA polymerase zeta catalytic subunit rev3l and the inserter polymerase rev1, thereby mediating the second polymerase switching in translesion DNA synthesis. Translesion DNA synthesis releases the replication blockade of replicative polymerases, stalled in presence of DNA lesions. May also play a role in signal transduction in response to DNA damage. May regulate the activation of the anaphase promoting complex APC thereby regulating progression through the cell cycle. Through transcriptional regulation may play a role in epithelial-mesenchymal transdifferentiation. The sequence is that of Mitotic spindle assembly checkpoint protein MAD2B (mad2l2) from Xenopus tropicalis (Western clawed frog).